The following is a 1331-amino-acid chain: Sodium-dependent transporter bedraggled (1331 aa).

Positions 1-62 (MSSKEQQAAG…QLEHEQFGLS (62 aa)) are disordered. Positions 16–25 (NSNAYSSLPP) are enriched in polar residues. Positions 28–43 (TGAGCSGAALGSGTGT) are enriched in gly residues. An N-linked (GlcNAc...) asparagine glycan is attached at asparagine 168. 2 disordered regions span residues 221-284 (EPRT…TEPV) and 363-473 (QTNA…SASS). The segment covering 258 to 282 (KTFSCSLRPTSQIASSSGSLETSTE) has biased composition (polar residues). Residues 369–383 (SSEEPRPRQYGRRLE) show a composition bias toward basic and acidic residues. Over residues 413 to 436 (LQDTPTHPIMSTCSELSSARSSRM) the composition is skewed to polar residues. The segment covering 437–453 (PSPVSLPSDSSSSGSSS) has biased composition (low complexity). Residues 463 to 473 (VQTTTMCSASS) show a composition bias toward polar residues. Helical transmembrane passes span 505–525 (LALI…VLTI), 531–551 (FLLQ…WLQM), and 567–587 (ISPI…FLAL). N-linked (GlcNAc...) asparagine glycosylation is found at asparagine 627 and asparagine 631. A run of 4 helical transmembrane segments spans residues 667–687 (QLAF…CKGL), 696–716 (IIYT…VYVV), 741–761 (TAAT…VIAI), and 778–798 (AILL…LALC). Asparagine 857 is a glycosylation site (N-linked (GlcNAc...) asparagine). A helical transmembrane segment spans residues 890–910 (WVWAAVAFATFAGFGLAQLCV). Residue asparagine 921 is glycosylated (N-linked (GlcNAc...) asparagine). The next 4 helical transmembrane spans lie at 926-946 (VLLS…EMGI), 956-976 (LGGS…VFLI), 998-1018 (AFLA…LSVV), and 1044-1064 (MGSL…IIQI). Disordered regions lie at residues 1086–1136 (PEEG…SYTT), 1169–1238 (SLDA…ASTL), and 1256–1275 (VRHR…TLPR). 2 stretches are compositionally biased toward polar residues: residues 1097-1115 (ARQT…TTEG) and 1186-1196 (ILTNPAGSSFN). Positions 1197–1209 (ADPSPASSSSPES) are enriched in low complexity.

The protein belongs to the sodium:neurotransmitter symporter (SNF) (TC 2.A.22) family.

It localises to the membrane. In terms of biological role, putative sodium-dependent transporter which is required for viability, early imaginal disk development and adult motor coordination. Also has a role in the fate commitment of the R3/R4 photoreceptor cells. May function in ommatidial polarity by regulating the activity of the core polarity genes, acting upstream of (or in parallel to) Vang, dsh, pk, stan, and dgo, but downstream or independently of fz. This Drosophila melanogaster (Fruit fly) protein is Sodium-dependent transporter bedraggled.